The following is a 155-amino-acid chain: 6,7-dimethyl-8-ribityllumazine synthase (155 aa).

Residues F23, 57 to 59 (AFE), and 81 to 83 (AVI) contribute to the 5-amino-6-(D-ribitylamino)uracil site. Residue 86-87 (ST) participates in (2S)-2-hydroxy-3-oxobutyl phosphate binding. H89 acts as the Proton donor in catalysis. F114 contributes to the 5-amino-6-(D-ribitylamino)uracil binding site. (2S)-2-hydroxy-3-oxobutyl phosphate is bound at residue R128.

The protein belongs to the DMRL synthase family.

The enzyme catalyses (2S)-2-hydroxy-3-oxobutyl phosphate + 5-amino-6-(D-ribitylamino)uracil = 6,7-dimethyl-8-(1-D-ribityl)lumazine + phosphate + 2 H2O + H(+). It participates in cofactor biosynthesis; riboflavin biosynthesis; riboflavin from 2-hydroxy-3-oxobutyl phosphate and 5-amino-6-(D-ribitylamino)uracil: step 1/2. In terms of biological role, catalyzes the formation of 6,7-dimethyl-8-ribityllumazine by condensation of 5-amino-6-(D-ribitylamino)uracil with 3,4-dihydroxy-2-butanone 4-phosphate. This is the penultimate step in the biosynthesis of riboflavin. The sequence is that of 6,7-dimethyl-8-ribityllumazine synthase from Geobacter metallireducens (strain ATCC 53774 / DSM 7210 / GS-15).